A 254-amino-acid polypeptide reads, in one-letter code: Protein CbbY, plasmid (254 aa).

The protein belongs to the HAD-like hydrolase superfamily. CbbY/CbbZ/Gph/YieH family.

This chain is Protein CbbY, plasmid (cbbYP), found in Cupriavidus necator (strain ATCC 17699 / DSM 428 / KCTC 22496 / NCIMB 10442 / H16 / Stanier 337) (Ralstonia eutropha).